The primary structure comprises 91 residues: DNA-binding protein HU (91 aa).

It belongs to the bacterial histone-like protein family. As to quaternary structure, homodimer.

In terms of biological role, histone-like DNA-binding protein which is capable of wrapping DNA to stabilize it, and thus to prevent its denaturation under extreme environmental conditions. This Lactococcus lactis subsp. lactis (strain IL1403) (Streptococcus lactis) protein is DNA-binding protein HU (hup).